A 73-amino-acid chain; its full sequence is Guanine nucleotide-binding protein G(I)/G(S)/G(O) subunit gamma-11 (73 aa).

The segment at 54-73 is disordered; it reads VKGIPEDKNPFKEKGSCIIS. Cysteine 70 is modified (cysteine methyl ester). Cysteine 70 carries the S-farnesyl cysteine lipid modification. A propeptide spans 71-73 (removed in mature form); it reads IIS.

The protein belongs to the G protein gamma family. As to quaternary structure, g proteins are composed of 3 units, alpha, beta and gamma. Interacts with beta-1 and beta-3, but not with beta-2.

It is found in the cell membrane. Its function is as follows. Guanine nucleotide-binding proteins (G proteins) are involved as a modulator or transducer in various transmembrane signaling systems. The beta and gamma chains are required for the GTPase activity, for replacement of GDP by GTP, and for G protein-effector interaction. The protein is Guanine nucleotide-binding protein G(I)/G(S)/G(O) subunit gamma-11 (GNG11) of Bos taurus (Bovine).